The sequence spans 239 residues: MRLDKLLANSGYGSRKEVKAVVKAGAVMIDGKPAKDVKEHVDPDTQEVTVYGEPVDYREFIYLMMNKPQGVLSATEDSRQQTVVDLLTPEEMRFEPFPAGRLDKDTEGFLLLTNDGQLAHRLLSPKKHVPKTYEVHLKSQISREDISDLETGVYIEGGYKTKPAKAEIKTNDSGNTVIYLTITEGKYHQVKQMAKAVGNEVVYLKRLSMGRVSLDPALAPGEYRELTEEELHLLNEPQA.

Residues 1 to 65 (MRLDKLLANS…DYREFIYLMM (65 aa)) form the S4 RNA-binding domain. The active-site Nucleophile is the Asp-103.

Belongs to the pseudouridine synthase RsuA family.

It catalyses the reaction a uridine in RNA = a pseudouridine in RNA. This is an uncharacterized protein from Bacillus subtilis (strain 168).